The following is a 686-amino-acid chain: MIHTPTGSSRRILTFPAVNPCESISLTTLVDSLLQLAGEILSFKPKHFSTNKRSVKETLRHVQTLVIFFEELRIQIRVGSIPAGRSVILSLSELHVIFQKLKFLLDDCTRDGAKLYMLMNSGQVSAHFRDLTRSISTSLDTFPVRSVDLPGEVNELIYLVMRQTRKSEARPDRDDKRAIDSVYWFFNLFENRINPNSDEILRVLDHIGVRKWRDCVKEIDFLREEISVGKKSNIEIELLSNLMGFICYCRCVILRGIDVDDEEKDKEEDDLMMVRSLNVDDLRCPISLEIMSDPVVLESGHTYDRSSITKWFASGNITCPKTGKTLVSTVLVDNFSVKQVIQSYSKQNGVVMGQKGKKKVDVAESLAAEEAGKLTAEFLAGELIKGDEEEMVKALVEIRILTKTSTFYRSCLVEAGVVESLMKILRSDDPRIQENAMAGIMNLSKDIAGKTRIVGEDGGGLRLIVEVLNDGARRESRQYAAAALFYLSSLGDYSRLIGEISDAIPGLVRIVKSCDYGDSAKRNALIAIRSLLMNQPDNHWRILAAGIVPVLLDLVKSEEISDGVTADSMAILAKMAEYPDGMISVLRRGGLKLAVKILGSSEVSPATKQHCVALLLNLCHNGGSDVVGSLAKNPSIMGSLYTASSNGELGGGKKASALIKMIHEFQERKTGPGEPVLERERFVHAW.

The U-box domain maps to 277–351 (LNVDDLRCPI…QSYSKQNGVV (75 aa)). ARM repeat units follow at residues 406–445 (TFYRSCLVEAGVVESLMKILRSDDPRIQENAMAGIMNLSK), 448–489 (AGKT…YLSS), 491–533 (GDYS…SLLM), 536–577 (PDNH…KMAE), and 579–620 (PDGM…NLCH).

It catalyses the reaction S-ubiquitinyl-[E2 ubiquitin-conjugating enzyme]-L-cysteine + [acceptor protein]-L-lysine = [E2 ubiquitin-conjugating enzyme]-L-cysteine + N(6)-ubiquitinyl-[acceptor protein]-L-lysine.. It participates in protein modification; protein ubiquitination. In terms of biological role, functions as an E3 ubiquitin ligase. This Arabidopsis thaliana (Mouse-ear cress) protein is U-box domain-containing protein 19 (PUB19).